We begin with the raw amino-acid sequence, 896 residues long: Protein argonaute 9 (896 aa).

Positions 267-380 (PVVDFLLANQ…FPIEFCNLVS (114 aa)) constitute a PAZ domain. Positions 550-857 (FLLCILAERK…AAAQMGTVMK (308 aa)) constitute a Piwi domain.

The protein belongs to the argonaute family. Ago subfamily. Expressed in embryonic shoot apex region, pollen and developing ovules.

In terms of biological role, involved in RNA-mediated post-transcriptional gene silencing (PTGS). Main component of the RNA-induced silencing complex (RISC) that binds to a short guide RNA such as a microRNA (miRNA) or small interfering RNA (siRNA). RISC uses the mature miRNA or siRNA as a guide for slicer-directed cleavage of homologous mRNAs to repress gene expression. Associates preferentially with small RNAs of 24 nucleotide in length with a 5' terminal adenosine. Interacts with 24 nucleotide sRNAs derived from transposable elements (TEs). Required to silence pericentrometric-located TEs in female gametes and their accessory cells. Necessary to inactivate a significant proportion of long terminal repeat retrotransposons (LTRs) in the ovule. Required to specify cell fate in ovule. Involved in the control of female gamete formation by restricting the specification of gametophyte precursors in a dosage-dependent, non-cell-autonomous manner. Targeted by turnip yellows virus (TuYV) protein P0 (via F-box-like domain) for probable proteasome degradation and thereby inactivating AGO9 function in RNA silencing. The protein is Protein argonaute 9 (AGO9) of Arabidopsis thaliana (Mouse-ear cress).